The following is a 300-amino-acid chain: N-acetylmuramic acid 6-phosphate etherase 1 (300 aa).

An SIS domain is found at 59 to 222 (AAERFKKGGR…STGIMVKVGN (164 aa)). Glu87 (proton donor) is an active-site residue. The active site involves Glu118.

The protein belongs to the GCKR-like family. MurNAc-6-P etherase subfamily. As to quaternary structure, homodimer.

The enzyme catalyses N-acetyl-D-muramate 6-phosphate + H2O = N-acetyl-D-glucosamine 6-phosphate + (R)-lactate. It functions in the pathway amino-sugar metabolism; N-acetylmuramate degradation. Functionally, specifically catalyzes the cleavage of the D-lactyl ether substituent of MurNAc 6-phosphate, producing GlcNAc 6-phosphate and D-lactate. This chain is N-acetylmuramic acid 6-phosphate etherase 1, found in Enterococcus faecalis (strain ATCC 700802 / V583).